Reading from the N-terminus, the 300-residue chain is Solute carrier family 25 member 35 (300 aa).

3 Solcar repeats span residues 1–90, 100–193, and 203–294; these read MDFL…AEAG, HSPA…TKDL, and QSWK…LRSL. The next 6 membrane-spanning stretches (helical) occupy residues 38–58, 59–79, 91–119, 169–190, 205–225, and 277–300; these read TYQR…KVDG, LAAL…MNGI, GYLH…GAYL, ALGG…FSST, WKLA…AMAP, and LGPH…TDTK.

It belongs to the mitochondrial carrier (TC 2.A.29) family.

It is found in the mitochondrion inner membrane. The catalysed reaction is a dicarboxylate(in) + sulfate(out) = a dicarboxylate(out) + sulfate(in). Putative antiporter that exchanges dicarboxylates and sulfur oxoanions across the inner membrane of mitochondria. This is Solute carrier family 25 member 35 (SLC25A35) from Homo sapiens (Human).